The chain runs to 347 residues: GMP reductase (347 aa).

NADP(+) is bound at residue 108 to 131 (ADFEKTVQILALNPALNFVCIDVA). K(+) contacts are provided by Gly181 and Gly183. Residue Cys186 is the Thioimidate intermediate of the active site. Residue 216-239 (IVSDGGCTMPGDVAKAFGGGADFV) participates in NADP(+) binding.

Belongs to the IMPDH/GMPR family. GuaC type 1 subfamily. Homotetramer.

It catalyses the reaction IMP + NH4(+) + NADP(+) = GMP + NADPH + 2 H(+). In terms of biological role, catalyzes the irreversible NADPH-dependent deamination of GMP to IMP. It functions in the conversion of nucleobase, nucleoside and nucleotide derivatives of G to A nucleotides, and in maintaining the intracellular balance of A and G nucleotides. The chain is GMP reductase from Salmonella typhi.